The sequence spans 431 residues: Putative serine/threonine-protein kinase B (431 aa).

The Protein kinase domain occupies 20–279 (YLNKGIVGLG…VRENFQIPYI (260 aa)). ATP-binding positions include 26–34 (VGLGSYGEG) and Lys49. Asp147 serves as the catalytic Proton acceptor. In terms of domain architecture, PH spans 331-429 (DVTHRGHVNK…WVHAIQRGIG (99 aa)).

It belongs to the protein kinase superfamily. Ser/Thr protein kinase family.

It carries out the reaction L-seryl-[protein] + ATP = O-phospho-L-seryl-[protein] + ADP + H(+). It catalyses the reaction L-threonyl-[protein] + ATP = O-phospho-L-threonyl-[protein] + ADP + H(+). This is Putative serine/threonine-protein kinase B (NRKB) from Trypanosoma brucei brucei.